The sequence spans 302 residues: Coiled-coil domain-containing protein 2 (302 aa).

The N-terminal stretch at 1–22 (MKNFGLLVVCLSLATLVIPSDG) is a signal peptide. Residues 198 to 234 (FADAMEKKAEALENAAEAAAEYISDQSEEVDDLSEEV) adopt a coiled-coil conformation. Residues 221 to 257 (SDQSEEVDDLSEEVLDDDSDENDSTSSESEVEDSDVD) are disordered. Residues 223-257 (QSEEVDDLSEEVLDDDSDENDSTSSESEVEDSDVD) are compositionally biased toward acidic residues. N-linked (GlcNAc...) asparagine glycosylation occurs at Asn-242.

In terms of tissue distribution, component of the acid-insoluble organic matrix of calcified layers of the shell (at protein level).

The protein resides in the secreted. The protein is Coiled-coil domain-containing protein 2 of Lottia gigantea (Giant owl limpet).